The primary structure comprises 804 residues: Protein translocase subunit SecA (804 aa).

ATP contacts are provided by residues Q87, 105–109, and D500; that span reads GEGKT.

The protein belongs to the SecA family. Monomer and homodimer. Part of the essential Sec protein translocation apparatus which comprises SecA, SecYEG and auxiliary proteins SecDF-YajC and YidC.

The protein resides in the cell inner membrane. It localises to the cytoplasm. It catalyses the reaction ATP + H2O + cellular proteinSide 1 = ADP + phosphate + cellular proteinSide 2.. In terms of biological role, part of the Sec protein translocase complex. Interacts with the SecYEG preprotein conducting channel. Has a central role in coupling the hydrolysis of ATP to the transfer of proteins into and across the cell membrane, serving both as a receptor for the preprotein-SecB complex and as an ATP-driven molecular motor driving the stepwise translocation of polypeptide chains across the membrane. This Neorickettsia sennetsu (strain ATCC VR-367 / Miyayama) (Ehrlichia sennetsu) protein is Protein translocase subunit SecA.